The following is a 245-amino-acid chain: MLIILVMFLLGIILGFIGAGGAGFVIALLTLLFHIPIHTALGTSLAGMAFTSLSGAYSHYREGNIQMKIGLIVGGFAAVGSFFGAKLTSFIPADLLHYLTAGMLFLSAILILIRLFILKEKAQVNQSTLSTYTRAVILGIAAGVLSGTFGIGSAPFIQIGLMIMLNLSIRHSVGTTMLVIIPLAVGGGIGYITEGFVDYVLLVKVLVGTMCGAYVGAKFTNLMPKVVLKSAIFLTPAIAGLLLLF.

The next 8 helical transmembrane spans lie at 1–21, 34–56, 71–91, 98–118, 137–157, 177–197, 199–219, and 225–245; these read MLIILVMFLLGIILGFIGAGG, HIPIHTALGTSLAGMAFTSLSGA, LIVGGFAAVGSFFGAKLTSFI, YLTAGMLFLSAILILIRLFIL, ILGIAAGVLSGTFGIGSAPFI, MLVIIPLAVGGGIGYITEGFV, YVLLVKVLVGTMCGAYVGAKF, and KVVLKSAIFLTPAIAGLLLLF.

The protein belongs to the 4-toluene sulfonate uptake permease (TSUP) (TC 2.A.102) family.

It is found in the cell membrane. This chain is Probable membrane transporter protein YdhB (ydhB), found in Bacillus subtilis (strain 168).